A 294-amino-acid polypeptide reads, in one-letter code: UDP-3-O-acyl-N-acetylglucosamine deacetylase (294 aa).

His75, His232, and Asp236 together coordinate Zn(2+). His259 serves as the catalytic Proton donor.

Belongs to the LpxC family. Zn(2+) is required as a cofactor.

The enzyme catalyses a UDP-3-O-[(3R)-3-hydroxyacyl]-N-acetyl-alpha-D-glucosamine + H2O = a UDP-3-O-[(3R)-3-hydroxyacyl]-alpha-D-glucosamine + acetate. It functions in the pathway glycolipid biosynthesis; lipid IV(A) biosynthesis; lipid IV(A) from (3R)-3-hydroxytetradecanoyl-[acyl-carrier-protein] and UDP-N-acetyl-alpha-D-glucosamine: step 2/6. Its function is as follows. Catalyzes the hydrolysis of UDP-3-O-myristoyl-N-acetylglucosamine to form UDP-3-O-myristoylglucosamine and acetate, the committed step in lipid A biosynthesis. This is UDP-3-O-acyl-N-acetylglucosamine deacetylase from Sulfurimonas denitrificans (strain ATCC 33889 / DSM 1251) (Thiomicrospira denitrificans (strain ATCC 33889 / DSM 1251)).